The chain runs to 402 residues: Zinc finger protein 586 (402 aa).

Positions 15–87 (VTFEDVAVNF…DQGGHSGERP (73 aa)) constitute a KRAB domain. The C2H2-type 1; degenerate zinc-finger motif lies at 88-116 (YECGEYRKLFKNKSCLTEPRRDHKHRNVR). Residues 122-144 (YECSKYGKLFHQKPTLHIHERFH) form a C2H2-type 2; degenerate zinc finger. The C2H2-type 3; degenerate zinc-finger motif lies at 150–172 (YECSECGKSFHQSSSLLQRQTLH). C2H2-type zinc fingers lie at residues 178 to 200 (YECI…RKVH), 206 to 228 (YECN…RRIH), 234 to 256 (YECS…LRVH), 262 to 284 (YECV…QRVH), 290 to 312 (YECS…QRVH), 317 to 339 (HECG…LRVH), 345 to 367 (YECS…LRVH), and 373 to 395 (YECI…QRVH).

The protein belongs to the krueppel C2H2-type zinc-finger protein family.

Its subcellular location is the nucleus. In terms of biological role, may be involved in transcriptional regulation. The protein is Zinc finger protein 586 (ZNF586) of Homo sapiens (Human).